A 395-amino-acid chain; its full sequence is tRNA-specific 2-thiouridylase MnmA (395 aa).

ATP is bound by residues 7–14 (GLSGGVDS) and Met33. The interval 95 to 97 (NPD) is interaction with target base in tRNA. Catalysis depends on Cys100, which acts as the Nucleophile. A disulfide bridge connects residues Cys100 and Cys200. Gly124 is an ATP binding site. Positions 150-152 (KDQ) are interaction with tRNA. Cys200 serves as the catalytic Cysteine persulfide intermediate. The tract at residues 346–347 (RY) is interaction with tRNA.

It belongs to the MnmA/TRMU family.

The protein localises to the cytoplasm. The enzyme catalyses S-sulfanyl-L-cysteinyl-[protein] + uridine(34) in tRNA + AH2 + ATP = 2-thiouridine(34) in tRNA + L-cysteinyl-[protein] + A + AMP + diphosphate + H(+). Functionally, catalyzes the 2-thiolation of uridine at the wobble position (U34) of tRNA, leading to the formation of s(2)U34. In Flavobacterium johnsoniae (strain ATCC 17061 / DSM 2064 / JCM 8514 / BCRC 14874 / CCUG 350202 / NBRC 14942 / NCIMB 11054 / UW101) (Cytophaga johnsonae), this protein is tRNA-specific 2-thiouridylase MnmA.